Reading from the N-terminus, the 61-residue chain is Small ribosomal subunit protein uS14 (61 aa).

The Zn(2+) site is built by C24, C27, C40, and C43.

The protein belongs to the universal ribosomal protein uS14 family. Zinc-binding uS14 subfamily. In terms of assembly, part of the 30S ribosomal subunit. Contacts proteins S3 and S10. Zn(2+) serves as cofactor.

Its function is as follows. Binds 16S rRNA, required for the assembly of 30S particles and may also be responsible for determining the conformation of the 16S rRNA at the A site. The protein is Small ribosomal subunit protein uS14 of Acidithiobacillus ferrooxidans (strain ATCC 23270 / DSM 14882 / CIP 104768 / NCIMB 8455) (Ferrobacillus ferrooxidans (strain ATCC 23270)).